Here is a 436-residue protein sequence, read N- to C-terminus: Acetyl-CoA decarbonylase/synthase complex subunit delta 1 (436 aa).

The protein belongs to the CdhD family. Heterodimer of delta and gamma chains. The ACDS complex is made up of alpha, epsilon, beta, gamma and delta chains with a probable stoichiometry of (alpha(2)epsilon(2))(4)-beta(8)-(gamma(1)delta(1))(8) (Potential).

It functions in the pathway one-carbon metabolism; methanogenesis from acetate. Part of a complex that catalyzes the reversible cleavage of acetyl-CoA, allowing growth on acetate as sole source of carbon and energy. Probably maintains the overall quaternary structure of the ACDS complex. In Methanosarcina thermophila, this protein is Acetyl-CoA decarbonylase/synthase complex subunit delta 1 (cdhD1).